A 440-amino-acid polypeptide reads, in one-letter code: Glycerate 2-kinase (440 aa).

A substrate-binding site is contributed by Lys-58.

Belongs to the glycerate kinase type-1 family. In terms of assembly, homodimer. The cofactor is Mg(2+). Requires Ni(2+) as cofactor. Mn(2+) is required as a cofactor. Co(2+) serves as cofactor.

It catalyses the reaction (R)-glycerate + ATP = (2R)-2-phosphoglycerate + ADP + H(+). Functionally, catalyzes the ATP-dependent phosphorylation of D-glycerate to 2-phosphoglycerate. It can also utilize GTP, CTP, UTP, ADP or pyrophosphate as phosphate donor. This Pyrococcus horikoshii (strain ATCC 700860 / DSM 12428 / JCM 9974 / NBRC 100139 / OT-3) protein is Glycerate 2-kinase (gck).